We begin with the raw amino-acid sequence, 409 residues long: Accessory Sec system protein translocase subunit SecY2 (409 aa).

10 consecutive transmembrane segments (helical) span residues 16–36 (ILIT…PIPG), 61–81 (LSQV…MILL), 104–124 (VVML…FQYH), 132–152 (LLLA…IGNL), 161–181 (MTIL…PLIF), 190–210 (LAII…ITFE), 242–262 (GMAF…IILL), 286–306 (GVVI…FVNI), 341–361 (LFGT…LLFA), and 374–394 (TGIF…FQVI).

It belongs to the SecY/SEC61-alpha family. SecY2 subfamily. As to quaternary structure, component of the accessory SecA2/SecY2 protein translocase complex required to export cell wall proteins. May form heterotrimers with SecE and SecG subunits.

It localises to the cell membrane. Part of the accessory SecA2/SecY2 system specifically required for export of possible cell wall proteins. The central subunit of a protein translocation channel. The chain is Accessory Sec system protein translocase subunit SecY2 from Streptococcus agalactiae serotype III (strain NEM316).